Here is a 38-residue protein sequence, read N- to C-terminus: Photosystem II reaction center protein L (38 aa).

Residues 17–37 (SLFWGLLLIFILAVLFSSYFF) traverse the membrane as a helical segment.

Belongs to the PsbL family. PSII is composed of 1 copy each of membrane proteins PsbA, PsbB, PsbC, PsbD, PsbE, PsbF, PsbH, PsbI, PsbJ, PsbK, PsbL, PsbM, PsbT, PsbX, PsbY, PsbZ, Psb30/Ycf12, at least 3 peripheral proteins of the oxygen-evolving complex and a large number of cofactors. It forms dimeric complexes.

It is found in the plastid. The protein resides in the chloroplast thylakoid membrane. Its function is as follows. One of the components of the core complex of photosystem II (PSII). PSII is a light-driven water:plastoquinone oxidoreductase that uses light energy to abstract electrons from H(2)O, generating O(2) and a proton gradient subsequently used for ATP formation. It consists of a core antenna complex that captures photons, and an electron transfer chain that converts photonic excitation into a charge separation. This subunit is found at the monomer-monomer interface and is required for correct PSII assembly and/or dimerization. This Guillardia theta (Cryptophyte) protein is Photosystem II reaction center protein L.